The sequence spans 706 residues: Mitochondrial intermediate peptidase, mitochondrial (706 aa).

A mitochondrion-targeting transit peptide spans 1–29 (MWKLTRRLQPHINSTRWLVRNFRNGGAGD). The tract at residues 212–238 (NPTYRSTSGGSRGSTRSAHKSKQKGFR) is disordered. Over residues 214-227 (TYRSTSGGSRGSTR) the composition is skewed to low complexity. His491 lines the Zn(2+) pocket. Glu492 is a catalytic residue. 2 residues coordinate Zn(2+): His495 and Glu520.

The protein belongs to the peptidase M3 family. Zn(2+) serves as cofactor.

The protein localises to the mitochondrion. In terms of biological role, aminopeptidase which cleaves preproteins, imported into the mitochondrion, to their mature size. Could cleave both preproteins and preprotein intermediates already cleaved by the mitochondrial processing peptidase (MPP). This chain is Mitochondrial intermediate peptidase, mitochondrial, found in Arabidopsis thaliana (Mouse-ear cress).